Here is a 316-residue protein sequence, read N- to C-terminus: 4-diphosphocytidyl-2-C-methyl-D-erythritol kinase (316 aa).

Lys14 is a catalytic residue. 96 to 106 lines the ATP pocket; sequence PMGAGLGGGSS. Asp138 is an active-site residue.

This sequence belongs to the GHMP kinase family. IspE subfamily.

The enzyme catalyses 4-CDP-2-C-methyl-D-erythritol + ATP = 4-CDP-2-C-methyl-D-erythritol 2-phosphate + ADP + H(+). It functions in the pathway isoprenoid biosynthesis; isopentenyl diphosphate biosynthesis via DXP pathway; isopentenyl diphosphate from 1-deoxy-D-xylulose 5-phosphate: step 3/6. Functionally, catalyzes the phosphorylation of the position 2 hydroxy group of 4-diphosphocytidyl-2C-methyl-D-erythritol. The polypeptide is 4-diphosphocytidyl-2-C-methyl-D-erythritol kinase (Solibacter usitatus (strain Ellin6076)).